The sequence spans 221 residues: Ribose-5-phosphate isomerase A (221 aa).

Substrate-binding positions include 26–29 (TGST), 81–84 (DGAD), and 94–97 (KGGG). Glu-103 acts as the Proton acceptor in catalysis. Residue Lys-121 coordinates substrate.

Belongs to the ribose 5-phosphate isomerase family. Homodimer.

It carries out the reaction aldehydo-D-ribose 5-phosphate = D-ribulose 5-phosphate. It participates in carbohydrate degradation; pentose phosphate pathway; D-ribose 5-phosphate from D-ribulose 5-phosphate (non-oxidative stage): step 1/1. Catalyzes the reversible conversion of ribose-5-phosphate to ribulose 5-phosphate. The chain is Ribose-5-phosphate isomerase A from Bacillus mycoides (strain KBAB4) (Bacillus weihenstephanensis).